The chain runs to 4138 residues: Fumosorinone synthetase (4138 aa).

The Ketosynthase family 3 (KS3) domain maps to Pro15–Arg455. Active-site for beta-ketoacyl synthase activity residues include Cys189, His328, and His375. The malonyl-CoA:ACP transacylase (MAT) domain stretch occupies residues Val590–Ala921. Residues His990–Arg1133 form an N-terminal hotdog fold region. The segment at His990–Arg1306 is dehydratase (DH) domain. Residues His990–Ala1309 enclose the PKS/mFAS DH domain. His1022 serves as the catalytic Proton acceptor; for dehydratase activity. Residues Leu1157 to Ala1309 are C-terminal hotdog fold. Asp1216 acts as the Proton donor; for dehydratase activity in catalysis. The segment at Arg1456 to Asp1650 is methyltransferase (MT) domain. Residues Thr2205–Val2379 are ketoreductase (KR) domain. The region spanning Glu2507 to Ala2587 is the Carrier 1 domain. Ser2547 carries the post-translational modification O-(pantetheine 4'-phosphoryl)serine. Residues Ala2587–Ser2683 are disordered. Basic and acidic residues predominate over residues Thr2610 to Lys2621. Residues Val2622–His2643 are compositionally biased toward polar residues. The segment covering Asp2647–Ser2659 has biased composition (low complexity). A compositionally biased stretch (polar residues) spans Ser2664–Glu2675. Positions Arg2701–Val3128 are condensation (C) domain. An adenylation (A) (KR) domain region spans residues Cys3162–Ile3564. Residues Glu3680–Arg3759 form the Carrier 2 domain. The residue at position 3719 (Ser3719) is an O-(pantetheine 4'-phosphoryl)serine. Positions Leu3813 to Val4045 are reductase (RED) domain.

The protein in the C-terminal section; belongs to the NRP synthetase family.

Its function is as follows. Hybrid PKS-NRPS synthetase; part of the gene cluster that mediates the biosynthesis of fumosorinone, a 2-pyridone alkaloid that acts as an inhibitor of protein tyrosine phosphatase 1B which is implicated asa negative regulator of insulin receptor signaling and a potential drug target for the treatment of type II diabetes and other associated metabolic syndromes. The polyketide-amino acid backbone of fumosorinone is first assembled by the PKS-NRPS hybrid fumoS. The PKS modules condense one acetyl-CoA starter unit with 7 malonyl-CoA units, programmed C-methylations occurring after the first 3 and the sixth extensions, and cycles of full reduction occurring after the first 2 extensions. Because fumoS lacks a designated enoyl reductase (ER) domain, the required activity is provided the enoyl reductase fumoC. Upon formation of the polyketide backbone on the thiotemplate, the polyketide is transferred to the NRPS module and linked to tyrosine to produce the acyltetramic acid intermediate called prefumosorinone A. The cytochrome P450 monooxygenase fumoA then probably catalyzes an unprecedented oxidative ring expansion of prefumosorinone A to form prefumosorinone B which contains the 2-pyridone core of fumosorinone. The cytochrome P450 monooxygenase fumoB might hydroxylate the nitrogen of prefumosorinone B, but not the acyltetramic acid prefumosorinone A, to form fumosorinone. This chain is Fumosorinone synthetase, found in Cordyceps fumosorosea (strain ARSEF 2679) (Isaria fumosorosea).